An 874-amino-acid chain; its full sequence is Collagen alpha-2(I) chain (874 aa).

The segment at 1 to 874 (SGGFDFSFLP…FGYEGDFYRA (874 aa)) is disordered. 4-hydroxyproline is present on residues Pro-10 and Pro-13. An Allysine modification is found at Lys-16. Positions 27–66 (LMGPRGPPGASGAPGPQGFQGPAGEPGEPGQTGPAGARGP) are enriched in low complexity. 4-hydroxyproline is present on residues Pro-34 and Pro-40. Lys-93 is modified (5-hydroxylysine; alternate). Lys-93 carries an O-linked (Gal...) hydroxylysine; alternate glycan. Composition is skewed to low complexity over residues 110 to 143 (ARGR…SAGP), 188 to 209 (PGAN…AGAP), and 218 to 236 (PGPV…AGSK). Residues 237 to 246 (GESGGKGEPG) show a composition bias toward gly residues. A compositionally biased stretch (low complexity) spans 247-257 (SAGPQGPPGSS). Residues Pro-317 and Pro-320 each carry the 4-hydroxyproline modification. Composition is skewed to low complexity over residues 346–365 (LPGI…RGEA), 434–451 (PGES…SRGP), and 463–473 (EPGVVGAPGTA). The segment covering 474-483 (GPAGSGGLPG) has biased composition (gly residues). Composition is skewed to low complexity over residues 491–538 (RGEV…PRGS) and 545–565 (VGPA…QPGA). Over residues 566–575 (KGERGTKGPK) the composition is skewed to basic and acidic residues. Residues 583–593 (PTGPVGSAGPA) show a composition bias toward low complexity. The segment covering 603–612 (GSRGDGGPPG) has biased composition (gly residues). Residues 614–623 (TGFPGAAGRT) are compositionally biased toward low complexity. Positions 648–662 (GPVGRGETGAGGPPG) are enriched in gly residues. Low complexity-rich tracts occupy residues 663 to 697 (FTGE…LGLP) and 705 to 724 (LPGV…AGPP). Positions 725–744 (GARGDGNPGSDGPPGRGAAG) are enriched in gly residues. 2 stretches are compositionally biased toward low complexity: residues 745–755 (APGPHGTVGPA) and 763–778 (EPGP…ALGP).

It belongs to the fibrillar collagen family. As to quaternary structure, trimers of one alpha 2(I) and two alpha 1(I) chains. Interacts (via C-terminus) with TMEM131 (via PapD-L domain); the interaction is direct and is involved in assembly and TRAPPIII ER-to-Golgi transport complex-dependent secretion of collagen. In terms of processing, prolines at the third position of the tripeptide repeating unit (G-X-Y) are hydroxylated in some or all of the chains. As to expression, expressed in bones.

Its subcellular location is the secreted. The protein resides in the extracellular space. It is found in the extracellular matrix. Type I collagen is a member of group I collagen (fibrillar forming collagen). The protein is Collagen alpha-2(I) chain of Megalonyx jeffersonii (Jefferson's ground sloth).